The sequence spans 964 residues: Insulin receptor substrate 1 (964 aa).

Residues 8 to 109 (GMALSGNLKK…WLDKLLVLQR (102 aa)) enclose the PH domain. In terms of domain architecture, IRS-type PTB spans 122 to 236 (YDQVWQVVIQ…SAMSAKTESN (115 aa)). Positions 249 to 268 (LSHEPMRKRSSSANEASKPI) are disordered. A phosphoserine mark is found at Ser-286, Ser-287, and Ser-342. Phosphotyrosine; by INSR is present on Tyr-410. The short motif at 410 to 413 (YIPM) is the YXXM motif 1 element. The segment at 527–560 (ASNRSQSSIGKEGSSYGSSANRQKKSTSAPLLSL) is disordered. The span at 528 to 560 (SNRSQSSIGKEGSSYGSSANRQKKSTSAPLLSL) shows a compositional bias: polar residues. A Phosphoserine modification is found at Ser-554. The YXXM motif 2 motif lies at 640–643 (YLEM). A compositionally biased stretch (basic and acidic residues) spans 698–712 (EKWREQPSRSEEKKS). The disordered stretch occupies residues 698–735 (EKWREQPSRSEEKKSNSPLNDNPFSLKPTNVESKSKSH). Positions 713–729 (NSPLNDNPFSLKPTNVE) are enriched in polar residues. At Tyr-907 the chain carries Phosphotyrosine; by INSR. The tract at residues 921–964 (AKYLKRGSRESPPVSACPEDGNTYARIDFDQSDSSSSSSNIFNT) is disordered. Residues Ser-928 and Ser-931 each carry the phosphoserine modification. Tyr-944 is subject to Phosphotyrosine; by INSR. A compositionally biased stretch (low complexity) spans 952–964 (SDSSSSSSNIFNT).

In terms of assembly, bindings to phosphatidylinositol 3-kinase and SHP2.

Activates phosphatidylinositol 3-kinase when bound to the regulatory p85 subunit. May mediate the control of various cellular processes by insulin-like peptides. When phosphorylated by the insulin receptor binds specifically to various cellular proteins containing SH2 domains. Involved in control of cell proliferation, cell size, and body and organ growth throughout development. Also has a role in a signaling pathway controlling the physiological response required to endure periods of low nutrient conditions. Insulin/insulin-like growth factor (IGF) signaling pathway has a role in regulating aging and is necessary in the ovary for vitellogenic maturation. The chain is Insulin receptor substrate 1 from Drosophila sechellia (Fruit fly).